A 301-amino-acid chain; its full sequence is Porphobilinogen deaminase (301 aa).

Cysteine 235 is subject to S-(dipyrrolylmethanemethyl)cysteine.

The protein belongs to the HMBS family. As to quaternary structure, monomer. Requires dipyrromethane as cofactor.

It catalyses the reaction 4 porphobilinogen + H2O = hydroxymethylbilane + 4 NH4(+). It participates in porphyrin-containing compound metabolism; protoporphyrin-IX biosynthesis; coproporphyrinogen-III from 5-aminolevulinate: step 2/4. Functionally, tetrapolymerization of the monopyrrole PBG into the hydroxymethylbilane pre-uroporphyrinogen in several discrete steps. This Thermus thermophilus (strain ATCC BAA-163 / DSM 7039 / HB27) protein is Porphobilinogen deaminase.